The primary structure comprises 163 residues: SsrA-binding protein (163 aa).

Positions 135 to 156 (GKKEHDKRDDTKEREWKIEKSR) are enriched in basic and acidic residues. The tract at residues 135–163 (GKKEHDKRDDTKEREWKIEKSRTMKHAAR) is disordered.

It belongs to the SmpB family.

The protein resides in the cytoplasm. Functionally, required for rescue of stalled ribosomes mediated by trans-translation. Binds to transfer-messenger RNA (tmRNA), required for stable association of tmRNA with ribosomes. tmRNA and SmpB together mimic tRNA shape, replacing the anticodon stem-loop with SmpB. tmRNA is encoded by the ssrA gene; the 2 termini fold to resemble tRNA(Ala) and it encodes a 'tag peptide', a short internal open reading frame. During trans-translation Ala-aminoacylated tmRNA acts like a tRNA, entering the A-site of stalled ribosomes, displacing the stalled mRNA. The ribosome then switches to translate the ORF on the tmRNA; the nascent peptide is terminated with the 'tag peptide' encoded by the tmRNA and targeted for degradation. The ribosome is freed to recommence translation, which seems to be the essential function of trans-translation. The chain is SsrA-binding protein from Shewanella loihica (strain ATCC BAA-1088 / PV-4).